We begin with the raw amino-acid sequence, 651 residues long: Macrolide export ATP-binding/permease protein MacB (651 aa).

An ABC transporter domain is found at 2 to 239 (IEIVNVTKTY…PQMPQGGMEA (238 aa)). 38–45 (GASGSGKS) contributes to the ATP binding site. Helical transmembrane passes span 269-289 (FLSV…MALG), 532-552 (IAAI…LVSV), 589-609 (IIGI…AGWA), and 614-634 (MFSV…FGLW).

The protein belongs to the ABC transporter superfamily. Macrolide exporter (TC 3.A.1.122) family. As to quaternary structure, homodimer.

The protein localises to the cell inner membrane. In terms of biological role, non-canonical ABC transporter that contains transmembrane domains (TMD), which form a pore in the inner membrane, and an ATP-binding domain (NBD), which is responsible for energy generation. Confers resistance against macrolides. This Chlorobaculum tepidum (strain ATCC 49652 / DSM 12025 / NBRC 103806 / TLS) (Chlorobium tepidum) protein is Macrolide export ATP-binding/permease protein MacB.